We begin with the raw amino-acid sequence, 218 residues long: uncharacterized protein (218 aa).

The next 2 membrane-spanning stretches (helical) occupy residues 14–34 (CLLSIITILLYWYLRFVYFTS) and 175–195 (LIIPIPFGTIKIIVGSPLALV).

This sequence to H.pylori HP0270.

The protein localises to the cell membrane. This is an uncharacterized protein from Rickettsia prowazekii (strain Madrid E).